We begin with the raw amino-acid sequence, 1690 residues long: DNA-directed RNA polymerase subunit beta' (1690 aa).

The Zn(2+) site is built by cysteine 63, cysteine 65, cysteine 78, and cysteine 81. Mg(2+) contacts are provided by aspartate 753, aspartate 755, and aspartate 757. 4 residues coordinate Zn(2+): cysteine 1107, cysteine 1295, cysteine 1302, and cysteine 1305.

It belongs to the RNA polymerase beta' chain family. The RNAP catalytic core consists of 2 alpha, 1 beta, 1 beta' and 1 omega subunit. When a sigma factor is associated with the core the holoenzyme is formed, which can initiate transcription. Requires Mg(2+) as cofactor. Zn(2+) is required as a cofactor.

The enzyme catalyses RNA(n) + a ribonucleoside 5'-triphosphate = RNA(n+1) + diphosphate. DNA-dependent RNA polymerase catalyzes the transcription of DNA into RNA using the four ribonucleoside triphosphates as substrates. This Thermotoga sp. (strain RQ2) protein is DNA-directed RNA polymerase subunit beta'.